The primary structure comprises 422 residues: uncharacterized protein (422 aa).

The protein belongs to the asfivirus K421R family.

Its subcellular location is the virion. This is an uncharacterized protein from Ornithodoros (relapsing fever ticks).